The chain runs to 118 residues: Basic phospholipase A2 1 (118 aa).

Disulfide bonds link C11–C72, C26–C117, C28–C44, C43–C98, C50–C91, C60–C84, and C78–C89. Residues Y27, G29, and G31 each coordinate Ca(2+). H47 is an active-site residue. Position 48 (D48) interacts with Ca(2+). D92 is an active-site residue.

This sequence belongs to the phospholipase A2 family. Group I subfamily. D49 sub-subfamily. Requires Ca(2+) as cofactor. Expressed by the venom gland.

It localises to the secreted. It catalyses the reaction a 1,2-diacyl-sn-glycero-3-phosphocholine + H2O = a 1-acyl-sn-glycero-3-phosphocholine + a fatty acid + H(+). Its function is as follows. PLA2 catalyzes the calcium-dependent hydrolysis of the 2-acyl groups in 3-sn-phosphoglycerides. This is Basic phospholipase A2 1 from Naja melanoleuca (Forest cobra).